The sequence spans 366 residues: GTP cyclohydrolase 1 type 2 homolog (366 aa).

H64, H65, D102, H326, and E329 together coordinate a divalent metal cation.

Belongs to the GTP cyclohydrolase I type 2/NIF3 family. In terms of assembly, homohexamer.

The protein is GTP cyclohydrolase 1 type 2 homolog of Staphylococcus epidermidis (strain ATCC 12228 / FDA PCI 1200).